A 216-amino-acid chain; its full sequence is MKSTIFFLFLFCAFTTSYLPSAIADFVLDNEGNPLENGGTYYILSDITAFGGIRAAPTGNERCPLTVVQSRNELDKGIGTIISSPYRIRFIAEGHPLSLKFDSFAVIMLCVGIPTEWSVVEDLPEGPAVKIGENKDAMDGWFRLERVSDDEFNNYKLVFCPQQAEDDKCGDIGISIDHDDGTRRLVVSKNKPLVVQFQKLDKESLAKKNHGLSRSE.

Positions 1–24 (MKSTIFFLFLFCAFTTSYLPSAIA) are cleaved as a signal peptide. 2 disulfides stabilise this stretch: Cys63–Cys110 and Cys160–Cys169. Positions 206–216 (AKKNHGLSRSE) are excised as a propeptide.

It belongs to the protease inhibitor I3 (leguminous Kunitz-type inhibitor) family.

Functionally, inhibition of trypsin. This Glycine max (Soybean) protein is Trypsin inhibitor A (KTI3).